The primary structure comprises 676 residues: Potassium voltage-gated channel subfamily KQT member 1 (676 aa).

Disordered regions lie at residues 1–28 (MAAA…RGSA) and 62–84 (APPA…PRPP). The Cytoplasmic segment spans residues 1 to 120 (MAAASSPPRA…YNFLERPTGW (120 aa)). Phosphoserine; by PKA is present on S27. Residues 62 to 73 (APPASPAAPAAP) are compositionally biased toward pro residues. Residues 121 to 142 (KCFVYHFAVFLIVLVCLIFSVL) traverse the membrane as a helical segment. The Extracellular segment spans residues 143-153 (STIEQYAALAT). Residues 154-176 (GTLFWMEIVLVVFFGTEYVVRLW) form a helical membrane-spanning segment. Over 177 to 192 (SAGCRSKYVGLWGRLR) the chain is Cytoplasmic. A helical membrane pass occupies residues 193 to 218 (FARKPISIIDLIVVVASMVVLCVGSK). The Extracellular segment spans residues 219–226 (GQVFATSA). A helical; Voltage-sensor membrane pass occupies residues 227–242 (IRGIRFLQILRMLHVD). The tract at residues 238–246 (MLHVDRQGG) is interaction with KCNE3. Topologically, residues 243–260 (RQGGTWRLLGSVVFIHRQ) are cytoplasmic. A 1,2-diacyl-sn-glycero-3-phospho-(1D-myo-inositol-4,5-bisphosphate) is bound at residue Q244. The helical transmembrane segment at 261-283 (ELITTLYIGFLGLIFSSYFVYLA) threads the bilayer. Topologically, residues 284–299 (EKDAVNESGRVEFGSY) are extracellular. N289 carries an N-linked (GlcNAc...) asparagine glycan. The pore-forming intramembrane region spans 300 to 320 (ADALWWGVVTVTTIGYGDKVP). At 321 to 322 (QT) the chain is on the extracellular side. A helical transmembrane segment spans residues 323 to 348 (WVGKTIASCFSVFAISFFALPAGILG). At 349-676 (SGFALKVQQK…VPRRGPDEGS (328 aa)) the chain is on the cytoplasmic side. Residues 370-382 (AAASLIQTAWRCY) form an interaction with CALM region. 2 positions are modified to phosphoserine: S407 and S409. Positions 515–529 (KVIRRMQYFVAKKKF) are interaction with CALM; calcium-dependent. The interval 535–572 (PYDVRDVIEQYSQGHLNLMVRIKELQRRLDQSIGKPSL) is interaction with KCNE1 C-terminus. Positions 585 to 621 (SNTIGARLNRVEDKVTQLDQRLALITDMLHQLLSLHG) form a coiled coil. Residues 588–616 (IGARLNRVEDKVTQLDQRLALITDMLHQL) are interaction with AKAP9. The C-terminal assembly domain (tetramerization) stretch occupies residues 589-620 (GARLNRVEDKVTQLDQRLALITDMLHQLLSLH). Residues 620 to 676 (HGGSTPGSGGPPREGGAHITQPCGSGGSVDPELFLPSNTLPTYEQLTVPRRGPDEGS) form a disordered region. Residues 623 to 632 (STPGSGGPPR) are compositionally biased toward gly residues. Polar residues predominate over residues 655 to 664 (PSNTLPTYEQ).

Belongs to the potassium channel family. KQT (TC 1.A.1.15) subfamily. Kv7.1/KCNQ1 sub-subfamily. In terms of assembly, tetramer. Heterotetramer with KCNE1; targets to the membrane raft. Interacts (via C-terminus) with calmodulin; forms a heterooctameric structure (with 4:4 KCNQ1:CALM stoichiometry); the interaction is calcium-independent, constitutive, participates in the proper assembly of a functional channel and also acts a calcium sensor. KCNQ1 channels interact more strongly with Ca(2+)-CALM than with apoCALM. Interacts with AKAP9; targets protein kinase A (PKA) catalytic and regulatory subunits and protein phosphatase 1 (PP1) to the KCNQ1-KCNE1 complex, allowing PKA-mediated phosphorylation and increase of delayed rectifier potassium channel activity. Interacts with KCNE2; forms a heterooligomer complex that targets to the membrane raft and leading to currents with an apparently instantaneous activation, a rapid deactivation process and a linear current-voltage relationship and decreases the amplitude of the outward current. Interacts with AP2M1; mediates estrogen-induced internalization via clathrin-coated vesicles. Interacts with NEDD4L; promotes internalization and decreases I(Ks) currents. Interacts with USP2; counteracts the NEDD4L-specific down-regulation of I(Ks) and restore plasma membrane localization. Heterotetramer with KCNQ5; has a voltage-gated potassium channel activity. Interacts with KCNE3; four KCNE3 molecules are bound to one KCNQ1 tetramer (4:4 KCNQ1:KCNE3 stoichiometry); alters membrane raft localization; affects KCNQ1 structure and gating properties. Interacts with KCNE4; impairs KCNQ1 localization in lipid rafts and inhibits voltage-gated potassium channel activity. Interacts with KCNE5; impairs KCNQ1 localization in lipid rafts and only conducts current upon strong and continued depolarization. Interacts with SLC5A3; forms coregulatory channel-transporter complexes that modulate Na(+)-coupled myo-inositol influx through the transporter. Post-translationally, phosphorylation at Ser-27 by PKA; increases delayed rectifier potassium channel activity of the KCNQ1-KCNE1 complex through a macromolecular complex that includes PKA, PP1, and the targeting protein AKAP9. In terms of processing, ubiquitinated by NEDD4L; promotes internalization. The ubiquitinylated form is internalized through a clathrin-mediated endocytosis by interacting with AP2M1 and is recycled back to the cell membrane via RAB4A and RAB11A. Deubiquitinated by USP2; counteracts the NEDD4L-specific down-regulation of I(Ks) and restores the membrane localization. As to expression, abundantly expressed in heart, pancreas, prostate, kidney, small intestine and peripheral blood leukocytes. Less abundant in placenta, lung, spleen, colon, thymus, testis and ovaries.

The protein localises to the cell membrane. Its subcellular location is the cytoplasmic vesicle membrane. It localises to the early endosome. The protein resides in the membrane raft. It is found in the endoplasmic reticulum. The protein localises to the basolateral cell membrane. Its subcellular location is the apical cell membrane. It catalyses the reaction K(+)(in) = K(+)(out). Its activity is regulated as follows. PIP2 molecule is essential to activate KCNQ channels by inducing the coupling of the voltage-sensing domain (VSD) and the pore-forming domain (PD). Upon channel activation, PIP2 disrupts the VSD-calmodulin/CALM interactions, causing the release of CALM from the VSD which triggers the opening of the gate. Calcium potentiates KCNQ1 channel current through calcium-bound CALM. Calcium-bound CALM competes with PIP2 to stabilize the channel open state. In terms of biological role, pore-forming subunit of the voltage-gated potassium (Kv) channel involved in the regulation of cardiomyocyte excitability and important in normal development and functions of myocardium, inner ear, stomach and colon. Associates with KCNE beta subunits that modulates current kinetics. Induces a voltage-dependent current by rapidly activating and slowly deactivating potassium-selective outward current. Also promotes a delayed voltage activated potassium current showing outward rectification characteristic. During beta-adrenergic receptor stimulation, participates in cardiac repolarization by associating with KCNE1 to form the I(Ks) cardiac potassium current that increases the amplitude and slows down the activation kinetics of outward potassium current I(Ks). Muscarinic agonist oxotremorine-M strongly suppresses KCNQ1/KCNE1 current. When associated with KCNE3, forms the potassium channel that is important for cyclic AMP-stimulated intestinal secretion of chloride ions. This interaction with KCNE3 is reduced by 17beta-estradiol, resulting in the reduction of currents. During conditions of increased substrate load, maintains the driving force for proximal tubular and intestinal sodium ions absorption, gastric acid secretion, and cAMP-induced jejunal chloride ions secretion. Allows the provision of potassium ions to the luminal membrane of the secretory canaliculus in the resting state as well as during stimulated acid secretion. When associated with KCNE2, forms a heterooligomer complex leading to currents with an apparently instantaneous activation, a rapid deactivation process and a linear current-voltage relationship and decreases the amplitude of the outward current. When associated with KCNE4, inhibits voltage-gated potassium channel activity. When associated with KCNE5, this complex only conducts current upon strong and continued depolarization. Also forms a heterotetramer with KCNQ5; has a voltage-gated potassium channel activity. Binds with phosphatidylinositol 4,5-bisphosphate. KCNQ1-KCNE2 channel associates with Na(+)-coupled myo-inositol symporter in the apical membrane of choroid plexus epithelium and regulates the myo-inositol gradient between blood and cerebrospinal fluid with an impact on neuron excitability. Non-functional alone but modulatory when coexpressed with the full-length isoform 1. The chain is Potassium voltage-gated channel subfamily KQT member 1 from Homo sapiens (Human).